Here is a 387-residue protein sequence, read N- to C-terminus: Structural protein ORF387 (387 aa).

Residues 315–387 adopt a coiled-coil conformation; it reads KTFQEMVKVA…EEKNNTVKLS (73 aa). Residues 365 to 387 are disordered; that stretch reads LTEEQQQQNETEEEEKNNTVKLS.

The protein resides in the virion. This Acidianus convivator (ATV) protein is Structural protein ORF387.